Here is a 472-residue protein sequence, read N- to C-terminus: Ribulose bisphosphate carboxylase large chain (472 aa).

Asparagine 116 and threonine 166 together coordinate substrate. Catalysis depends on lysine 168, which acts as the Proton acceptor. Lysine 170 serves as a coordination point for substrate. 3 residues coordinate Mg(2+): lysine 194, aspartate 196, and glutamate 197. Lysine 194 is subject to N6-carboxylysine. Histidine 287 (proton acceptor) is an active-site residue. Residues arginine 288, histidine 320, and serine 372 each coordinate substrate.

The protein belongs to the RuBisCO large chain family. Type I subfamily. In terms of assembly, heterohexadecamer of 8 large chains and 8 small chains. It depends on Mg(2+) as a cofactor.

It catalyses the reaction 2 (2R)-3-phosphoglycerate + 2 H(+) = D-ribulose 1,5-bisphosphate + CO2 + H2O. The catalysed reaction is D-ribulose 1,5-bisphosphate + O2 = 2-phosphoglycolate + (2R)-3-phosphoglycerate + 2 H(+). Functionally, ruBisCO catalyzes two reactions: the carboxylation of D-ribulose 1,5-bisphosphate, the primary event in carbon dioxide fixation, as well as the oxidative fragmentation of the pentose substrate. Both reactions occur simultaneously and in competition at the same active site. This chain is Ribulose bisphosphate carboxylase large chain, found in Nitrobacter vulgaris.